Consider the following 272-residue polypeptide: Phosphoribosylformylglycinamidine synthase subunit PurQ (272 aa).

A Glutamine amidotransferase type-1 domain is found at Val-8–Lys-272. Cys-98 acts as the Nucleophile in catalysis. Active-site residues include His-225, Glu-227, and Glu-235.

Part of the FGAM synthase complex composed of 1 PurL, 1 PurQ and 2 PurS subunits.

It is found in the cytoplasm. It catalyses the reaction N(2)-formyl-N(1)-(5-phospho-beta-D-ribosyl)glycinamide + L-glutamine + ATP + H2O = 2-formamido-N(1)-(5-O-phospho-beta-D-ribosyl)acetamidine + L-glutamate + ADP + phosphate + H(+). It carries out the reaction L-glutamine + H2O = L-glutamate + NH4(+). It functions in the pathway purine metabolism; IMP biosynthesis via de novo pathway; 5-amino-1-(5-phospho-D-ribosyl)imidazole from N(2)-formyl-N(1)-(5-phospho-D-ribosyl)glycinamide: step 1/2. In terms of biological role, part of the phosphoribosylformylglycinamidine synthase complex involved in the purines biosynthetic pathway. Catalyzes the ATP-dependent conversion of formylglycinamide ribonucleotide (FGAR) and glutamine to yield formylglycinamidine ribonucleotide (FGAM) and glutamate. The FGAM synthase complex is composed of three subunits. PurQ produces an ammonia molecule by converting glutamine to glutamate. PurL transfers the ammonia molecule to FGAR to form FGAM in an ATP-dependent manner. PurS interacts with PurQ and PurL and is thought to assist in the transfer of the ammonia molecule from PurQ to PurL. The protein is Phosphoribosylformylglycinamidine synthase subunit PurQ of Methanococcus maripaludis (strain DSM 14266 / JCM 13030 / NBRC 101832 / S2 / LL).